An 85-amino-acid polypeptide reads, in one-letter code: Small ribosomal subunit protein eS27 (85 aa).

A C4-type zinc finger spans residues 38–60; sequence CHGCRTITTVFSHAQNVVICSSC.

The protein belongs to the eukaryotic ribosomal protein eS27 family. Zn(2+) serves as cofactor.

This Dictyostelium discoideum (Social amoeba) protein is Small ribosomal subunit protein eS27 (rps27).